Consider the following 347-residue polypeptide: Quinolinate synthase (347 aa).

Residues His47 and Ser68 each coordinate iminosuccinate. Cys113 contacts [4Fe-4S] cluster. Iminosuccinate-binding positions include 139-141 (YAN) and Ser156. Residue Cys200 coordinates [4Fe-4S] cluster. Residues 226–228 (HPE) and Thr243 each bind iminosuccinate. Residue Cys297 coordinates [4Fe-4S] cluster.

Belongs to the quinolinate synthase family. Type 1 subfamily. Requires [4Fe-4S] cluster as cofactor.

Its subcellular location is the cytoplasm. The enzyme catalyses iminosuccinate + dihydroxyacetone phosphate = quinolinate + phosphate + 2 H2O + H(+). It functions in the pathway cofactor biosynthesis; NAD(+) biosynthesis; quinolinate from iminoaspartate: step 1/1. Its function is as follows. Catalyzes the condensation of iminoaspartate with dihydroxyacetone phosphate to form quinolinate. The polypeptide is Quinolinate synthase (Shigella boydii serotype 18 (strain CDC 3083-94 / BS512)).